We begin with the raw amino-acid sequence, 296 residues long: Nucleotide-binding protein SEQ_0857 (296 aa).

13–20 lines the ATP pocket; the sequence is GMSGAGKT. 63-66 contacts GTP; it reads DMRS.

The protein belongs to the RapZ-like family.

Its function is as follows. Displays ATPase and GTPase activities. The protein is Nucleotide-binding protein SEQ_0857 of Streptococcus equi subsp. equi (strain 4047).